The sequence spans 431 residues: MFMSQIVDIRAREILDSRGNPTIEADVILASGVVGRACAPSGASTGSREALELRDGDKARYLGKGVKTAVNNVNTIIRDALVGKSVFEQKDIDNTMIELDGTENKEKLGANATLAVSLAAARAAADEKKIPLFQYIADLRGQTILTMPVPMMNIINGGSHADNNVDIQEFMIEPVGFTSFSEALRAGAEIFHSLKSVLNKKGLNTAVGDEGGFAPNLRSNEEAITVILEAIGQTGYKAGSDIMLALDCASSEFYKNGQYILAGEGNKAFTSNQFSDYLAGLVNQYPIISIEDGLDESDWEGWSYLTSILGDKIQLVGDDLFVTNPKILQRGINEKVGNSILIKYNQIGTLTETLDAIYLAKDNGYSTVISHRSGETEDSTIADLAVGTAAGQIKTGSLCRSDRVAKYNQLLRIEELTKAAYRGKAEFKGLN.

(2R)-2-phosphoglycerate is bound at residue glutamine 168. Glutamate 210 (proton donor) is an active-site residue. Aspartate 247, glutamate 291, and aspartate 318 together coordinate Mg(2+). The (2R)-2-phosphoglycerate site is built by lysine 343, arginine 372, serine 373, and lysine 394. Lysine 343 functions as the Proton acceptor in the catalytic mechanism.

Belongs to the enolase family. In terms of assembly, component of the RNA degradosome, a multiprotein complex involved in RNA processing and mRNA degradation. The cofactor is Mg(2+).

The protein localises to the cytoplasm. It localises to the secreted. Its subcellular location is the cell surface. The catalysed reaction is (2R)-2-phosphoglycerate = phosphoenolpyruvate + H2O. The protein operates within carbohydrate degradation; glycolysis; pyruvate from D-glyceraldehyde 3-phosphate: step 4/5. Catalyzes the reversible conversion of 2-phosphoglycerate (2-PG) into phosphoenolpyruvate (PEP). It is essential for the degradation of carbohydrates via glycolysis. The chain is Enolase from Acinetobacter baylyi (strain ATCC 33305 / BD413 / ADP1).